The following is a 764-amino-acid chain: Complement factor B (764 aa).

Residues 1–25 (MGSNLSPQLCLMPFILGLLSGGVTT) form the signal peptide. Sushi domains lie at 35 to 100 (GSCS…ECRA), 101 to 160 (IHCP…ICDN), and 163 to 220 (GYCS…SCQD). 6 disulfides stabilise this stretch: cysteine 37–cysteine 76, cysteine 62–cysteine 98, cysteine 103–cysteine 145, cysteine 131–cysteine 158, cysteine 165–cysteine 205, and cysteine 191–cysteine 218. N-linked (GlcNAc...) asparagine glycans are attached at residues asparagine 122 and asparagine 142. The VWFA domain occupies 270 to 469 (NIYLVLDGSD…NLEDVFFQMI (200 aa)). Mg(2+) contacts are provided by serine 278 and serine 280. N-linked (GlcNAc...) asparagine glycosylation occurs at asparagine 285. Position 353 (threonine 353) interacts with Mg(2+). A glycan (N-linked (GlcNAc...) asparagine) is linked at asparagine 378. The Peptidase S1 domain occupies 477–757 (LCGMVWEHRK…VLPWLKQKLQ (281 aa)). 5 cysteine pairs are disulfide-bonded: cysteine 478-cysteine 596, cysteine 511-cysteine 527, cysteine 599-cysteine 615, cysteine 656-cysteine 682, and cysteine 695-cysteine 725. Catalysis depends on charge relay system residues histidine 526 and aspartate 576. The active-site Charge relay system is serine 699.

This sequence belongs to the peptidase S1 family. As to quaternary structure, monomer. Interacts with complement C3b; this interaction is dependent on the presence of Mg(2+). In terms of assembly, catalytic component of the C3 convertase of the alternative complement pathway, also named C3bBb, composed of complement factor B Bb and complement C3b. Catalytic component of the C5 convertase of the alternative complement pathway, also named C3bBb3b, composed of complement factor B Bb and additional molecules of complement C3b. Interacts to CFP; this interaction contributes to the stabilization of the active C3-convertase enzyme complex. It depends on Mg(2+) as a cofactor. Mn(2+) serves as cofactor. In terms of processing, cleaved by CFD following activation of the alternative complement system, generating Ba and Bb chains. Cleavage and activation takes place when CFB is already associated with complement C3b.

The protein localises to the secreted. It is found in the cell surface. It catalyses the reaction Cleavage of Arg-|-Ser bond in complement component C3 alpha-chain to yield C3a and C3b, and Arg-|-Xaa bond in complement component C5 alpha-chain to yield C5a and C5b.. In terms of biological role, precursor of the catalytic component of the C3 and C5 convertase complexes of the alternative pathway of the complement system, a cascade of proteins that leads to phagocytosis and breakdown of pathogens and signaling that strengthens the adaptive immune system. The alternative complement pathway acts as an amplification loop that enhances other complement pathways (classical, lectin and GZMK) by promoting formation of additional C3 and C5 convertases. CFB is cleaved and activated by CFD to generate Ba and Bb chains; Bb chain constituting the catalytic component of the C3 and C5 convertases. Functionally, serine protease component of the complement C3 and C5 convertase complexes of the alternative complement pathway. Following cleavage and activation by factor D (CFD), forms the C3 convertase together with complement C3b. As part of the C3 convertase, cleaves and activates C3 into C3a anaphylatoxin and C3b opsonin, the next components of the complement pathways. When an additional complement C3b molecule binds to the C3 convertase, forms the C5 convertase, which cleaves and activates C5 into C5a anaphylatoxin and C5b component of the membrane attack complex. Involved in proliferation and differentiation of preactivated B-lymphocytes, rapid spreading of peripheral blood monocytes, stimulation of lymphocyte blastogenesis and lysis of erythrocytes. In Pongo pygmaeus (Bornean orangutan), this protein is Complement factor B (CFB).